The following is a 139-amino-acid chain: Large ribosomal subunit protein uL13c (139 aa).

The protein belongs to the universal ribosomal protein uL13 family. Part of the 50S ribosomal subunit.

It localises to the plastid. The protein resides in the chloroplast. This chain is Large ribosomal subunit protein uL13c, found in Trieres chinensis (Marine centric diatom).